We begin with the raw amino-acid sequence, 133 residues long: DNA-binding protein StpA (133 aa).

A disordered region spans residues 81 to 115 (AMPRSAKKRQPRPAKYRFTDFNGEEKTWTGQGRTP). The segment covering 85–95 (SAKKRQPRPAK) has biased composition (basic residues). The DNA-binding element occupies 111 to 116 (QGRTPK).

It belongs to the histone-like protein H-NS family. In terms of assembly, forms homodimers, can interact with H-NS.

It is found in the cytoplasm. The protein localises to the nucleoid. Its function is as follows. A DNA-binding protein that acts in a fashion similar to H-NS, repressing gene transcription. A subset of H-NS/StpA-regulated genes require auxillary proteins for repression; these auxillary proteins (Hha and other similar proteins) may also modulate oligomerization of the H-NS/StpA complex. The polypeptide is DNA-binding protein StpA (stpA) (Salmonella typhi).